The sequence spans 245 residues: MSSAQDPFYIVKEEIQDSIDKLQSTFHKWERISPDMGDQAHVAKELVATCGSIEWQVDELEKAITVAAKDPSWYGIDEAELEKRRRWTSNARTQVRNVKSGVLAGKVSSGAGHASEVRRELMRMPNSGEASRYDQYGGRDDDGFVQSESDRQMLLIKQQDEELDELSKSVQRIGGVGLTIHDELVAQERIIDELDTEMDSTKNRLEFVQKKVGMVMKKAGAKGQMMMICFLLVLFIILFVLVFLT.

The Cytoplasmic portion of the chain corresponds to 1–224 (MSSAQDPFYI…VMKKAGAKGQ (224 aa)). Residues 153 to 215 (MLLIKQQDEE…EFVQKKVGMV (63 aa)) form the t-SNARE coiled-coil homology domain. The helical; Anchor for type IV membrane protein transmembrane segment at 225-245 (MMMICFLLVLFIILFVLVFLT) threads the bilayer.

This sequence belongs to the syntaxin family. Interacts with VTI12 and either SYP41, SYP42 or SYP51 in the trans-Golgi network or with VTI11 and SYP51 in the prevacuolar compartment to form t-SNARE complexes. Core constituent of the SNARE complex required for membrane fusion at the trans-Golgi network. Also observed in the SYP121-complex and cellulose synthases. Colocalizes with PIP2-7 and SYP121 in trafficking vesicles and at the plasma membrane. Interacts with SYP121 and PIP2-7. Expressed in root, leaf, stem, flower and silique, but not in hypocotyl or young leaf. Strong expression in the vasculature and in guard cells of the leaf epidermis.

The protein localises to the golgi apparatus. It localises to the trans-Golgi network membrane. The protein resides in the prevacuolar compartment membrane. In terms of biological role, vesicle trafficking protein that functions in the secretory pathway; the fusion of phospholipid vesicles containing SYP61 and VTI12 is triggered by YKT61 and YKT62. Together with VTI12, required for membrane fusion. Involved in osmotic stress tolerance and in abscisic acid (ABA) regulation of stomatal responses. Plays a role in the exocytic trafficking of cellulose synthases (CESAs) and the transport of cell wall components to the plasma membrane. Together with SYP121, regulates the post-Golgi trafficking of the aquaporin PIP2-7 to the plasma membrane, thus modulating cell membrane water permeability. In Arabidopsis thaliana (Mouse-ear cress), this protein is Syntaxin-61.